A 130-amino-acid chain; its full sequence is Small ribosomal subunit protein uS11 (130 aa).

It belongs to the universal ribosomal protein uS11 family. In terms of assembly, part of the 30S ribosomal subunit. Interacts with proteins S7 and S18. Binds to IF-3.

Located on the platform of the 30S subunit, it bridges several disparate RNA helices of the 16S rRNA. Forms part of the Shine-Dalgarno cleft in the 70S ribosome. The sequence is that of Small ribosomal subunit protein uS11 from Synechococcus sp. (strain CC9902).